A 314-amino-acid chain; its full sequence is Mitochondrial thiamine pyrophosphate carrier 1 (314 aa).

6 consecutive transmembrane segments (helical) span residues 14 to 30, 84 to 100, 116 to 136, 170 to 186, 217 to 233, and 285 to 302; these read VAAW…GLLA, LLYV…YSLF, LVVG…FDVL, GSIA…SIMF, SAGT…TFPL, and GILV…VSFW. Solcar repeat units lie at residues 14 to 103, 110 to 195, and 210 to 310; these read VAAW…FNRY, EARL…IRIY, and ELAT…AIHY.

Belongs to the mitochondrial carrier (TC 2.A.29) family.

It localises to the mitochondrion inner membrane. In terms of biological role, mitochondrial transporter that mediates uptake of thiamine pyrophosphate (ThPP) into mitochondria. This is Mitochondrial thiamine pyrophosphate carrier 1 (TPC1) from Saccharomyces cerevisiae (strain YJM789) (Baker's yeast).